Here is a 988-residue protein sequence, read N- to C-terminus: MTKRETVERRLSEVPPGVIRPYTQTELKSVFSTLKDIGKAEPAVAALLAGESPLKDFIAAAFTLSPYLRDMAAADEGLLTLAISKPLEPLLTDLVRDARDCWKPAEDAVPVENEVMSRLRIAKRRLSFVAALADLARIFTARDTTRWLSEMADASLSAAIDHLLLSAHESGKLKLKNLAAPSEGSGLIVLGMGKLGARELNYSSDIDAVVFFEPSAGIIDDPYDATENFGRMMRRLVRIMQERTADGYVFRTDLRLRPDPGSTPLAIPVEAALLYYEGRGQNWERAAYIKARPVAGDIKAGENFLRELTPFIFRKYLDYAAIADIHSIKRQIHAHKGHGAIAVKGHNVKLGRGGIREIEFFAQTQQLIAGGRMPPLRVRATEDALAALTEAKWIDAETRDSLTEAYWFLREVEHRIQMVRDEQTHVLPDTEAELKRIAFMLGFEDTKAFSEKLEEVLRLVERRYSALFEQETKLSGEAGNLVFTGQKDDPDTLKTLSTLGFQRPEDISRVIRTWHNGRYRATQSVEARERLTELTPDLLRAFGESKRADEALLRFDNFLSGLPAGIQLFSLLGNNPALLSLLVTIMSSAPRLAEIIAARPHVFDGMLDPALMSDVPTRDYLAHRMGNFLSNARHYEDILDRLRIFAAEQRFLIGVRLLTGAIRGEVAARAFTHLADLVIEAALNAVLSEMEAAHGPYPGGRVAVMGMGKLGSFELTAGSDVDLILLYDYDDTAQESTGAKPLDVVRYFTRVTQRLIAALSAPTAEGVLYEVDMRLRPSGNKGPVATRISAFEKYQREEAWTWEHMALSRARLICGDASLMEDARSIIASILSQKRDVAKVSTDVLDMRSLIEQEKPPENNWDFKLINGGLIDLEFIAQYLALIGPVKGLGAHEPGRNTAEALQALAAPVMESQAFDDCMAAMGLYTEISQIVRLCIDGAFNPKEAPAGLIDLVCRAGDCPDIPTLEGEVKRLSKAVRKAFVAVVKNGG.

Residues 1–472 (MTKRETVERR…RYSALFEQET (472 aa)) form an adenylyl removase region. Residues 476 to 988 (GEAGNLVFTG…AFVAVVKNGG (513 aa)) form an adenylyl transferase region.

It belongs to the GlnE family. Mg(2+) serves as cofactor.

It carries out the reaction [glutamine synthetase]-O(4)-(5'-adenylyl)-L-tyrosine + phosphate = [glutamine synthetase]-L-tyrosine + ADP. The enzyme catalyses [glutamine synthetase]-L-tyrosine + ATP = [glutamine synthetase]-O(4)-(5'-adenylyl)-L-tyrosine + diphosphate. Functionally, involved in the regulation of glutamine synthetase GlnA, a key enzyme in the process to assimilate ammonia. When cellular nitrogen levels are high, the C-terminal adenylyl transferase (AT) inactivates GlnA by covalent transfer of an adenylyl group from ATP to specific tyrosine residue of GlnA, thus reducing its activity. Conversely, when nitrogen levels are low, the N-terminal adenylyl removase (AR) activates GlnA by removing the adenylyl group by phosphorolysis, increasing its activity. The regulatory region of GlnE binds the signal transduction protein PII (GlnB) which indicates the nitrogen status of the cell. This is Bifunctional glutamine synthetase adenylyltransferase/adenylyl-removing enzyme from Agrobacterium fabrum (strain C58 / ATCC 33970) (Agrobacterium tumefaciens (strain C58)).